Consider the following 190-residue polypeptide: 3-isopropylmalate dehydratase small subunit (190 aa).

Belongs to the LeuD family. LeuD type 1 subfamily. As to quaternary structure, heterodimer of LeuC and LeuD.

It catalyses the reaction (2R,3S)-3-isopropylmalate = (2S)-2-isopropylmalate. Its pathway is amino-acid biosynthesis; L-leucine biosynthesis; L-leucine from 3-methyl-2-oxobutanoate: step 2/4. Catalyzes the isomerization between 2-isopropylmalate and 3-isopropylmalate, via the formation of 2-isopropylmaleate. In Staphylococcus aureus (strain MRSA252), this protein is 3-isopropylmalate dehydratase small subunit.